Here is a 498-residue protein sequence, read N- to C-terminus: GTPase Der (498 aa).

2 consecutive EngA-type G domains span residues 3–167 (PVVA…FDDL) and 210–383 (IKLA…KSAT). Residues 9–16 (GRPNVGKS), 57–61 (DTGGI), 119–122 (NKID), 216–223 (GRPNVGKS), 263–267 (DTAGV), and 328–331 (NKWD) contribute to the GTP site. One can recognise a KH-like domain in the interval 384-468 (TRVGTSVLTR…PIRINFQNSD (85 aa)).

This sequence belongs to the TRAFAC class TrmE-Era-EngA-EngB-Septin-like GTPase superfamily. EngA (Der) GTPase family. Associates with the 50S ribosomal subunit.

In terms of biological role, GTPase that plays an essential role in the late steps of ribosome biogenesis. The polypeptide is GTPase Der (Vibrio campbellii (strain ATCC BAA-1116)).